The sequence spans 380 residues: Cytochrome b (380 aa).

Helical transmembrane passes span 34–54, 78–99, 114–134, and 179–199; these read FGSL…LLAM, WLIR…YLHI, WNVG…GYVL, and FFAL…VHLT. The heme b site is built by H84 and H98. Heme b is bound by residues H183 and H197. H202 is a binding site for a ubiquinone. A run of 4 helical transmembrane segments spans residues 227–247, 289–309, 321–341, and 348–368; these read IKDI…ALFS, LGGV…PLLH, LSQI…WIGS, and FIII…VLFP.

This sequence belongs to the cytochrome b family. The cytochrome bc1 complex contains 11 subunits: 3 respiratory subunits (MT-CYB, CYC1 and UQCRFS1), 2 core proteins (UQCRC1 and UQCRC2) and 6 low-molecular weight proteins (UQCRH/QCR6, UQCRB/QCR7, UQCRQ/QCR8, UQCR10/QCR9, UQCR11/QCR10 and a cleavage product of UQCRFS1). This cytochrome bc1 complex then forms a dimer. It depends on heme b as a cofactor.

The protein resides in the mitochondrion inner membrane. Its function is as follows. Component of the ubiquinol-cytochrome c reductase complex (complex III or cytochrome b-c1 complex) that is part of the mitochondrial respiratory chain. The b-c1 complex mediates electron transfer from ubiquinol to cytochrome c. Contributes to the generation of a proton gradient across the mitochondrial membrane that is then used for ATP synthesis. The chain is Cytochrome b (MT-CYB) from Vireo olivaceus (Red-eyed vireo).